The primary structure comprises 673 residues: Transcription initiation factor IIB (673 aa).

Residues 38-69 (EEIVCPICGSKEVVKDYERAEIVCAKCGCVIK) form a TFIIB-type zinc finger. C42, C45, C61, and C64 together coordinate Zn(2+). The 120-residue stretch at 238–357 (ILGYIIAEGY…VIFLLLQIKE (120 aa)) folds into the DOD-type homing endonuclease domain. Repeat copies occupy residues 490 to 573 (SELD…AREL) and 584 to 665 (DYVP…ELTE).

This sequence belongs to the TFIIB family. This protein undergoes a protein self splicing that involves a post-translational excision of the intervening region (intein) followed by peptide ligation.

In terms of biological role, stabilizes TBP binding to an archaeal box-A promoter. Also responsible for recruiting RNA polymerase II to the pre-initiation complex (DNA-TBP-TFIIB). The chain is Transcription initiation factor IIB (tfb) from Methanocaldococcus jannaschii (strain ATCC 43067 / DSM 2661 / JAL-1 / JCM 10045 / NBRC 100440) (Methanococcus jannaschii).